The sequence spans 942 residues: Leucine--tRNA ligase 1 (942 aa).

Residues 39-49 (PYTNSPLHIGH) carry the 'HIGH' region motif. A 'KMSKS' region motif is present at residues 624 to 628 (KMSKS). Residue lysine 627 participates in ATP binding.

This sequence belongs to the class-I aminoacyl-tRNA synthetase family.

It is found in the cytoplasm. It carries out the reaction tRNA(Leu) + L-leucine + ATP = L-leucyl-tRNA(Leu) + AMP + diphosphate. This Sulfolobus acidocaldarius (strain ATCC 33909 / DSM 639 / JCM 8929 / NBRC 15157 / NCIMB 11770) protein is Leucine--tRNA ligase 1.